The primary structure comprises 491 residues: Fatty acyl-CoA reductase 1 (491 aa).

Belongs to the fatty acyl-CoA reductase family. As to expression, expressed in the endodermal cell layer surrounding the central vasculature in roots. Expressed in the hilum region of seeds. Expressed in lateral root tips, cotyledons, the shoot apex, young leaves, petals, stamen filaments, and receptacle of siliques.

The catalysed reaction is a long-chain fatty acyl-CoA + 2 NADPH + 2 H(+) = a long-chain primary fatty alcohol + 2 NADP(+) + CoA. Catalyzes the reduction of fatty acyl-CoA to fatty alcohols. Catalyzes specifically the formation of C18:0 and C22:0 fatty alcohols. Provides the fatty alcohols required for synthesis of suberin in roots, seed coat and wound-induced leaf tissue. Provides the fatty alcohols required for synthesis of alkyl hydroxycinnamates in root waxes. In Arabidopsis thaliana (Mouse-ear cress), this protein is Fatty acyl-CoA reductase 1.